Here is a 544-residue protein sequence, read N- to C-terminus: Phosphomannomutase (544 aa).

Residue Ser145 is the Phosphoserine intermediate of the active site. Positions 145, 297, 299, and 301 each coordinate Mg(2+).

It belongs to the phosphohexose mutase family. The cofactor is Mg(2+).

It carries out the reaction alpha-D-mannose 1-phosphate = D-mannose 6-phosphate. The protein is Phosphomannomutase (manB) of Mycoplasmoides pirum (Mycoplasma pirum).